A 997-amino-acid polypeptide reads, in one-letter code: Protein translocase subunit SecA (997 aa).

Residues Q84, 102-106, and D582 contribute to the ATP site; that span reads GEGKT. Positions 950–997 are disordered; sequence PYVPVPEAKPEPSEVFGVERKRATPPPQPGLSRAERRRLMRQEKKRKK. The span at 957 to 971 shows a compositional bias: basic and acidic residues; the sequence is AKPEPSEVFGVERKR. Residues 984 to 997 are compositionally biased toward basic residues; it reads ERRRLMRQEKKRKK.

Belongs to the SecA family. As to quaternary structure, monomer and homodimer. Part of the essential Sec protein translocation apparatus which comprises SecA, SecYEG and auxiliary proteins SecDF. Other proteins may also be involved.

Its subcellular location is the cell inner membrane. The protein resides in the cytoplasm. The catalysed reaction is ATP + H2O + cellular proteinSide 1 = ADP + phosphate + cellular proteinSide 2.. In terms of biological role, part of the Sec protein translocase complex. Interacts with the SecYEG preprotein conducting channel. Has a central role in coupling the hydrolysis of ATP to the transfer of proteins into and across the cell membrane, serving as an ATP-driven molecular motor driving the stepwise translocation of polypeptide chains across the membrane. In Thermus thermophilus (strain ATCC BAA-163 / DSM 7039 / HB27), this protein is Protein translocase subunit SecA.